Here is a 530-residue protein sequence, read N- to C-terminus: Probable ATP-binding protein YbiT (530 aa).

ABC transporter domains lie at 2–252 (LVSS…ERLL) and 320–526 (LEVE…YLRS). Residues 34 to 41 (GANGSGKS) and 352 to 359 (GTNGVGKS) each bind ATP.

This sequence belongs to the ABC transporter superfamily. ABCF family. YbiT subfamily.

The polypeptide is Probable ATP-binding protein YbiT (ybiT) (Escherichia coli O157:H7).